A 547-amino-acid polypeptide reads, in one-letter code: Chaperonin GroEL (547 aa).

ATP-binding positions include 30 to 33 (TLGP), K51, 87 to 91 (DGTTT), G415, and D496.

The protein belongs to the chaperonin (HSP60) family. In terms of assembly, forms a cylinder of 14 subunits composed of two heptameric rings stacked back-to-back. Interacts with the co-chaperonin GroES.

Its subcellular location is the cytoplasm. The enzyme catalyses ATP + H2O + a folded polypeptide = ADP + phosphate + an unfolded polypeptide.. Functionally, together with its co-chaperonin GroES, plays an essential role in assisting protein folding. The GroEL-GroES system forms a nano-cage that allows encapsulation of the non-native substrate proteins and provides a physical environment optimized to promote and accelerate protein folding. This Pelodictyon phaeoclathratiforme (strain DSM 5477 / BU-1) protein is Chaperonin GroEL.